Here is a 661-residue protein sequence, read N- to C-terminus: tRNA uridine 5-carboxymethylaminomethyl modification enzyme MnmG (661 aa).

FAD is bound at residue 13–18; that stretch reads GGGHAG. 285 to 299 provides a ligand contact to NAD(+); the sequence is GPRYCPSVEDKINRF.

Belongs to the MnmG family. In terms of assembly, homodimer. Heterotetramer of two MnmE and two MnmG subunits. FAD serves as cofactor.

It localises to the cytoplasm. In terms of biological role, NAD-binding protein involved in the addition of a carboxymethylaminomethyl (cmnm) group at the wobble position (U34) of certain tRNAs, forming tRNA-cmnm(5)s(2)U34. The sequence is that of tRNA uridine 5-carboxymethylaminomethyl modification enzyme MnmG from Acidovorax sp. (strain JS42).